Reading from the N-terminus, the 379-residue chain is Putative acetyl-CoA C-acetyltransferase VraB (379 aa).

Cys-86 acts as the Acyl-thioester intermediate in catalysis. The active-site Proton acceptor is His-338.

It belongs to the thiolase-like superfamily. Thiolase family.

This is Putative acetyl-CoA C-acetyltransferase VraB (vraB) from Staphylococcus aureus (strain COL).